A 287-amino-acid chain; its full sequence is Lectin 10 (287 aa).

Over 1-11 (MALSNLKSNRT) the chain is Cytoplasmic. The chain crosses the membrane as a helical span at residues 12–31 (LSSSLITIFIISLFLQYHNI). Residues 32–287 (KSQSSWQSRQ…IINWSFESAL (256 aa)) lie on the Extracellular side of the membrane. Asn-124, Asn-147, Asn-243, and Asn-280 each carry an N-linked (GlcNAc...) asparagine glycan.

It belongs to the leguminous lectin family.

The protein resides in the membrane. May be involved in arbuscular mycorrhizal (AM) symbiosis with AM fungi. This is Lectin 10 from Medicago truncatula (Barrel medic).